We begin with the raw amino-acid sequence, 160 residues long: Nucleotide-binding protein ASA_3207 (160 aa).

It belongs to the YajQ family.

Nucleotide-binding protein. The sequence is that of Nucleotide-binding protein ASA_3207 from Aeromonas salmonicida (strain A449).